A 721-amino-acid chain; its full sequence is Polyribonucleotide nucleotidyltransferase (721 aa).

2 residues coordinate Mg(2+): Asp485 and Asp491. Residues 552–611 enclose the KH domain; it reads PKIYIVKIHPDKIREIIGPGGKVIRELQAMSNTRIEVDDSGTVKIAASTEEEARIAIKAV. An S1 motif domain is found at 621 to 689; the sequence is GEIYEGEVVR…PEGKIRLSRK (69 aa). Positions 687–721 are disordered; sequence SRKALLPAPEKGEEDEKSAPRSRRPGGNSDRRNNR.

The protein belongs to the polyribonucleotide nucleotidyltransferase family. The cofactor is Mg(2+).

It localises to the cytoplasm. The enzyme catalyses RNA(n+1) + phosphate = RNA(n) + a ribonucleoside 5'-diphosphate. Functionally, involved in mRNA degradation. Catalyzes the phosphorolysis of single-stranded polyribonucleotides processively in the 3'- to 5'-direction. The sequence is that of Polyribonucleotide nucleotidyltransferase from Desulfosudis oleivorans (strain DSM 6200 / JCM 39069 / Hxd3) (Desulfococcus oleovorans).